Consider the following 491-residue polypeptide: Protein DETOXIFICATION 28 (491 aa).

12 consecutive transmembrane segments (helical) span residues 47–67 (IVGP…ITQA), 77–97 (LAAI…LFIG), 127–147 (IVLF…TPIL), 160–180 (SGII…FFPI), 192–212 (VIAI…WLFV), 228–248 (VSWW…GCPL), 272–292 (GIMV…TGNL), 302–322 (MSIC…FFAG), 352–372 (IIGI…GWMF), 387–407 (ILLS…GVAV), 414–434 (LVAF…GIVM), and 444–464 (GIWA…LIFI).

Belongs to the multi antimicrobial extrusion (MATE) (TC 2.A.66.1) family.

It localises to the membrane. This Arabidopsis thaliana (Mouse-ear cress) protein is Protein DETOXIFICATION 28.